The chain runs to 317 residues: Putative HTH-type transcriptional regulatory protein Mboo_0195 (317 aa).

An HTH cro/C1-type domain is found at 132–185 (LRELRERRSMSLGDLGQVLGVSRRTISKYESGMGTTLEVAIRIEEYFNTGVVES). The segment at residues 143–162 (LGDLGQVLGVSRRTISKYES) is a DNA-binding region (H-T-H motif).

This Methanoregula boonei (strain DSM 21154 / JCM 14090 / 6A8) protein is Putative HTH-type transcriptional regulatory protein Mboo_0195.